Reading from the N-terminus, the 440-residue chain is MARFFQPKKHSTLDTKHQPVTIERLDHQGSGLAFLHKKPLFVDGALPGEEVLIQLTENKSKYARGQLIKVLKPSAERVAPFCAHYAQCGGCDLQHLDRAGQIHHKQQALSQLMVKFAGQSLALSAPVCSDDQGYRRRARLSLMWDKKTQQLQLGFRRKQSKAIVNVTDCPVLEPSLNALLPDLNALLSEWSQPERLGHVELVKGDNTRVLVLRHLGALIEQDQQRLTDFASQNQLTLYLMLEAGELQHVQGEAPYCEETGSRLSFLPSHFIQVNRAVNQHMVAQALNWLEVSPQEHVLDLFCGLGNFTLPLAKQAQAVVGVEGVDEMVQHATHNAKLNQINNVAFYQANLEQDMTSASWAQQKFAKVLLDPARAGAEGIVDQLSALGAKRVVYVSCNPATLARDSQSLLSQGFRLEKLGMLDMFPHTSHLESMALFVKKG.

One can recognise a TRAM domain in the interval serine 11–lysine 69. The [4Fe-4S] cluster site is built by cysteine 82, cysteine 88, cysteine 91, and cysteine 169. S-adenosyl-L-methionine-binding residues include glutamine 272, phenylalanine 301, asparagine 306, glutamate 322, asparagine 349, and aspartate 370. Cysteine 396 (nucleophile) is an active-site residue.

It belongs to the class I-like SAM-binding methyltransferase superfamily. RNA M5U methyltransferase family. RlmD subfamily.

It carries out the reaction uridine(1939) in 23S rRNA + S-adenosyl-L-methionine = 5-methyluridine(1939) in 23S rRNA + S-adenosyl-L-homocysteine + H(+). Catalyzes the formation of 5-methyl-uridine at position 1939 (m5U1939) in 23S rRNA. In Vibrio cholerae serotype O1 (strain ATCC 39541 / Classical Ogawa 395 / O395), this protein is 23S rRNA (uracil(1939)-C(5))-methyltransferase RlmD.